The chain runs to 228 residues: Large ribosomal subunit protein uL4 (228 aa).

Disordered regions lie at residues 45–102 (GRQG…SQRT) and 208–228 (PAKGKTAKAAATSGEAEEANQ). Residues 208-221 (PAKGKTAKAAATSG) are compositionally biased toward low complexity.

The protein belongs to the universal ribosomal protein uL4 family. Part of the 50S ribosomal subunit.

One of the primary rRNA binding proteins, this protein initially binds near the 5'-end of the 23S rRNA. It is important during the early stages of 50S assembly. It makes multiple contacts with different domains of the 23S rRNA in the assembled 50S subunit and ribosome. Its function is as follows. Forms part of the polypeptide exit tunnel. This is Large ribosomal subunit protein uL4 from Saccharopolyspora erythraea (strain ATCC 11635 / DSM 40517 / JCM 4748 / NBRC 13426 / NCIMB 8594 / NRRL 2338).